A 101-amino-acid polypeptide reads, in one-letter code: MRERYLYLADTPQGILMSGQVPEYQFWLLAEISPVHSEKVINALRDYLVMGYNRMEACGRHSVSPGYFSGALKRFQRVSQTVYRLVPFYFPEAGHEVHRGE.

Functionally, regulates the transcription of genes involved in the biosynthesis of afimbrial adhesin-III. This chain is AFA-III adhesin operon regulatory protein (afaA), found in Escherichia coli.